The sequence spans 312 residues: Methionyl-tRNA formyltransferase (312 aa).

109–112 (SLLP) serves as a coordination point for (6S)-5,6,7,8-tetrahydrofolate.

This sequence belongs to the Fmt family.

The catalysed reaction is L-methionyl-tRNA(fMet) + (6R)-10-formyltetrahydrofolate = N-formyl-L-methionyl-tRNA(fMet) + (6S)-5,6,7,8-tetrahydrofolate + H(+). Functionally, attaches a formyl group to the free amino group of methionyl-tRNA(fMet). The formyl group appears to play a dual role in the initiator identity of N-formylmethionyl-tRNA by promoting its recognition by IF2 and preventing the misappropriation of this tRNA by the elongation apparatus. The polypeptide is Methionyl-tRNA formyltransferase (Caulobacter sp. (strain K31)).